A 115-amino-acid chain; its full sequence is Cobalt-zinc-cadmium resistance protein CzcI (115 aa).

Positions 1–20 are cleaved as a signal peptide; the sequence is MRRFVLIFVLLILPFQFSWA. Polar residues predominate over residues 93-102; that stretch reads QHSSEFSSLN. Positions 93 to 115 are disordered; the sequence is QHSSEFSSLNARAPDRPQWQRLA.

The protein resides in the periplasm. In terms of biological role, component of the czc cation-efflux system that confers resistance to cobalt, zinc and cadmium. May have a regulatory function. This Cupriavidus metallidurans (strain ATCC 43123 / DSM 2839 / NBRC 102507 / CH34) (Ralstonia metallidurans) protein is Cobalt-zinc-cadmium resistance protein CzcI (czcI).